We begin with the raw amino-acid sequence, 114 residues long: MGFRFPVKTKLPPGFINARVLKDSFKRQQAADHEVTVTALKYIARNTALPTRARMEAQLQLAVMPNYTRMTQVRNRCIATGHARSVITDFRLCRTQFREKAKNGELPGVKKGVW.

This sequence belongs to the universal ribosomal protein uS14 family.

It localises to the mitochondrion. The chain is Small ribosomal subunit protein uS14m (MRP2) from Eremothecium gossypii (strain ATCC 10895 / CBS 109.51 / FGSC 9923 / NRRL Y-1056) (Yeast).